The sequence spans 150 residues: Myeloid-derived growth factor homolog (150 aa).

Positions 1–22 (MTFLKYLLILCTIFLMVTNSLS) are cleaved as a signal peptide.

It belongs to the MYDGF family.

The protein localises to the secreted. The sequence is that of Myeloid-derived growth factor homolog from Dictyostelium discoideum (Social amoeba).